A 167-amino-acid polypeptide reads, in one-letter code: S-ribosylhomocysteine lyase (167 aa).

The Fe cation site is built by H54, H58, and C128.

This sequence belongs to the LuxS family. Homodimer. The cofactor is Fe cation.

The catalysed reaction is S-(5-deoxy-D-ribos-5-yl)-L-homocysteine = (S)-4,5-dihydroxypentane-2,3-dione + L-homocysteine. In terms of biological role, involved in the synthesis of autoinducer 2 (AI-2) which is secreted by bacteria and is used to communicate both the cell density and the metabolic potential of the environment. The regulation of gene expression in response to changes in cell density is called quorum sensing. Catalyzes the transformation of S-ribosylhomocysteine (RHC) to homocysteine (HC) and 4,5-dihydroxy-2,3-pentadione (DPD). The sequence is that of S-ribosylhomocysteine lyase from Sulfurimonas denitrificans (strain ATCC 33889 / DSM 1251) (Thiomicrospira denitrificans (strain ATCC 33889 / DSM 1251)).